The following is a 302-amino-acid chain: MSHPHSNAVKSFLLDLQDRICAALEQADGKAQFAEDAWSREAGGGGRSRVLTGGEVFEQAGVNFSHVHGDALPPSASAHRPELAGRRFEAMGVSLVIHPSNPHVPTSHANVRFFIAEKDGEAPVWWFGGGFDLTPFYPQEEDAVHWHTVARDLCAPFGGDVYPRYKKWCDEYFHLKHRNEARGIGGLFFDDLNEWGFDKSFAFTRAVGDGYLDAYLPIVARRKEQAWGDRERQFQLYRRGRYVEFNLVWDRGTLFGLQSGGRTESILMSMPPLVRWEYGYQPEPGSPEARLYTDFLPPRDWV.

Substrate is bound at residue serine 94. Histidine 98 and histidine 108 together coordinate a divalent metal cation. Histidine 108 acts as the Proton donor in catalysis. Residue asparagine 110–arginine 112 coordinates substrate. A divalent metal cation contacts are provided by histidine 147 and histidine 177. Residues tyrosine 242–glutamate 277 form an important for dimerization region. Glycine 260–arginine 262 contributes to the substrate binding site.

Belongs to the aerobic coproporphyrinogen-III oxidase family. As to quaternary structure, homodimer. A divalent metal cation is required as a cofactor.

The protein resides in the cytoplasm. The catalysed reaction is coproporphyrinogen III + O2 + 2 H(+) = protoporphyrinogen IX + 2 CO2 + 2 H2O. The protein operates within porphyrin-containing compound metabolism; protoporphyrin-IX biosynthesis; protoporphyrinogen-IX from coproporphyrinogen-III (O2 route): step 1/1. In terms of biological role, involved in the heme biosynthesis. Catalyzes the aerobic oxidative decarboxylation of propionate groups of rings A and B of coproporphyrinogen-III to yield the vinyl groups in protoporphyrinogen-IX. The chain is Oxygen-dependent coproporphyrinogen-III oxidase from Chromobacterium violaceum (strain ATCC 12472 / DSM 30191 / JCM 1249 / CCUG 213 / NBRC 12614 / NCIMB 9131 / NCTC 9757 / MK).